Here is a 467-residue protein sequence, read N- to C-terminus: MDRYGNLSDDGEVDHSFFDSDVDESANKVGVASVGSNKQENINTNVNKDVNKISFENKQNVMSGEKGRNHVYEEKIAKPSSPSTAAVAPRPDSALKSGRTSAQSLRIEATIPTGIPQIRREFEDNYYPDEEDSSEDECHNSRPKTAKQTNIGKKSTGKSNRDFVSTISSSDTEYSDTGSDDGASKSSYQSSKGSLMRSPERKPSRSSMRELRHYAEESEDTVTDVTPLSTPDISPIQSFDLAATSEVLKSTFKRQENISQEIYDPDNDLRINQKAVQDAVDLNQLLKAFMHLDKKEPSSVQDENPVMHNKKNFSFSNDEVRQIERENQRLLKELTRQAAKPRSKSLTPKKPMSAPTRLYHSAINRQKEQQRIERENMALLKRLESVKPTVGMTRTEQLMDYQRQAGYLSATALSPRPGKASVSRLSPSVSSGGFSRMSSATNRSERTGSSGALLRPTRSGNVRAAWQ.

4 disordered regions span residues 1-20, 76-235, 336-370, and 412-467; these read MDRYGNLSDDGEVDHSFFDS, IAKP…DISP, RQAAKPRSKSLTPKKPMSAPTRLYHSAINRQKEQQ, and ALSP…AAWQ. Positions 124 to 135 are enriched in acidic residues; sequence DNYYPDEEDSSE. Residues 162 to 177 show a composition bias toward polar residues; the sequence is DFVSTISSSDTEYSDT. Residues 180 to 194 are compositionally biased toward low complexity; it reads DDGASKSSYQSSKGS. Residues 198 to 216 show a composition bias toward basic and acidic residues; sequence SPERKPSRSSMRELRHYAE. Residues 223-235 show a composition bias toward polar residues; the sequence is TDVTPLSTPDISP. Residues 310–387 adopt a coiled-coil conformation; that stretch reads KKNFSFSNDE…ALLKRLESVK (78 aa). Residues 421–439 show a composition bias toward low complexity; that stretch reads SVSRLSPSVSSGGFSRMSS.

It belongs to the CFAP97 family.

This chain is Cilia- and flagella-associated protein 97, found in Xenopus tropicalis (Western clawed frog).